We begin with the raw amino-acid sequence, 345 residues long: Matrix protein (345 aa).

Residues K148–S185 form a disordered region. The span at E164 to G173 shows a compositional bias: basic and acidic residues.

The protein resides in the virion. The chain is Matrix protein (M2) from Aphis (Hairy beggarticks).